A 514-amino-acid polypeptide reads, in one-letter code: UDP-N-acetylmuramyl-tripeptide synthetase (514 aa).

Residues leucine 44 and serine 46 each contribute to the UDP-N-acetyl-alpha-D-muramoyl-L-alanyl-D-glutamate site. 129 to 135 provides a ligand contact to ATP; sequence GTNGKTS. UDP-N-acetyl-alpha-D-muramoyl-L-alanyl-D-glutamate-binding positions include 171–172, serine 198, and arginine 206; that span reads TT. Lysine 238 bears the N6-carboxylysine mark.

This sequence belongs to the MurCDEF family. MurE subfamily. Carboxylation is probably crucial for Mg(2+) binding and, consequently, for the gamma-phosphate positioning of ATP.

It is found in the cytoplasm. The protein operates within cell wall biogenesis; peptidoglycan biosynthesis. Functionally, catalyzes the addition of an amino acid to the nucleotide precursor UDP-N-acetylmuramoyl-L-alanyl-D-glutamate (UMAG) in the biosynthesis of bacterial cell-wall peptidoglycan. This Leifsonia xyli subsp. xyli (strain CTCB07) protein is UDP-N-acetylmuramyl-tripeptide synthetase.